We begin with the raw amino-acid sequence, 276 residues long: Protease HtpX homolog (276 aa).

A helical transmembrane segment spans residues 16 to 36; that stretch reads LFIWFGGMIAGQTGMVIAFLV. His-130 contributes to the Zn(2+) binding site. Glu-131 is a catalytic residue. Residue His-134 coordinates Zn(2+). The next 2 helical transmembrane spans lie at 142–162 and 173–193; these read IGTV…FGMF and IFVM…IQMT. Glu-199 is a binding site for Zn(2+).

Belongs to the peptidase M48B family. Zn(2+) is required as a cofactor.

The protein localises to the cell inner membrane. The polypeptide is Protease HtpX homolog (Sulfurovum sp. (strain NBC37-1)).